We begin with the raw amino-acid sequence, 159 residues long: Phosphopantetheine adenylyltransferase (159 aa).

Thr-10 contacts substrate. ATP is bound by residues 10–11 (TF) and His-18. Residues Lys-42, Met-74, and Arg-88 each contribute to the substrate site. Residues 89–91 (GLR), Glu-99, and 124–130 (WSFISSS) each bind ATP.

The protein belongs to the bacterial CoaD family. As to quaternary structure, homohexamer. The cofactor is Mg(2+).

It localises to the cytoplasm. The catalysed reaction is (R)-4'-phosphopantetheine + ATP + H(+) = 3'-dephospho-CoA + diphosphate. The protein operates within cofactor biosynthesis; coenzyme A biosynthesis; CoA from (R)-pantothenate: step 4/5. Its function is as follows. Reversibly transfers an adenylyl group from ATP to 4'-phosphopantetheine, yielding dephospho-CoA (dPCoA) and pyrophosphate. This Cronobacter sakazakii (strain ATCC BAA-894) (Enterobacter sakazakii) protein is Phosphopantetheine adenylyltransferase.